A 315-amino-acid chain; its full sequence is ATP synthase gamma chain (315 aa).

It belongs to the ATPase gamma chain family. As to quaternary structure, F-type ATPases have 2 components, CF(1) - the catalytic core - and CF(0) - the membrane proton channel. CF(1) has five subunits: alpha(3), beta(3), gamma(1), delta(1), epsilon(1). CF(0) has three main subunits: a, b and c.

It is found in the cellular thylakoid membrane. Functionally, produces ATP from ADP in the presence of a proton gradient across the membrane. The gamma chain is believed to be important in regulating ATPase activity and the flow of protons through the CF(0) complex. The sequence is that of ATP synthase gamma chain from Nostoc punctiforme (strain ATCC 29133 / PCC 73102).